The following is a 228-amino-acid chain: Small ribosomal subunit protein uS7A (228 aa).

This sequence belongs to the universal ribosomal protein uS7 family.

This Drosophila melanogaster (Fruit fly) protein is Small ribosomal subunit protein uS7A (RpS5a).